Here is a 500-residue protein sequence, read N- to C-terminus: Neuronal acetylcholine receptor subunit beta-2 (500 aa).

The first 24 residues, 1 to 24 (MAGHSNSMALFSFSLLWLCSGVLG), serve as a signal peptide directing secretion. At 25-237 (TDTEERLVEH…IIRRKPLFYT (213 aa)) the chain is on the extracellular side. N-linked (GlcNAc...) asparagine glycosylation is found at N50 and N167. Residues C154 and C168 are joined by a disulfide bond. The chain crosses the membrane as a helical span at residues 238–258 (INLIIPCVLITSLAILVFYLP). Over 259-266 (SDCGEKMT) the chain is Cytoplasmic. The helical transmembrane segment at 267-287 (LCISVLLALTVFLLLISKIVP) threads the bilayer. The Extracellular portion of the chain corresponds to 288-299 (PTSLDVPLVGKY). The helical transmembrane segment at 300-320 (LMFTMVLVTFSIVTSVCVLNV) threads the bilayer. Over 321–458 (HHRSPTTHTM…WKYVAMVIDR (138 aa)) the chain is Cytoplasmic. A helical membrane pass occupies residues 459 to 479 (LFLWIFVFVCVFGTVGMFLQP).

This sequence belongs to the ligand-gated ion channel (TC 1.A.9) family. Acetylcholine receptor (TC 1.A.9.1) subfamily. Beta-2/CHRNB2 sub-subfamily. As to quaternary structure, neuronal AChR is a heteropentamer composed of two different types of subunits: alpha and beta. CHRNB2/Beta-2 subunit can be combined to CHRNA2/alpha-2, CHRNA3/alpha-3 or CHRNA4/alpha-4, CHRNA5/alpha-5, CHRNA6/alpha-6 and CHRNB3/beta-3 to give rise to functional receptors. CHRNA2:CHRNB2 and CHRNA4:CHRNB2 nAChR complexes exist in two subtypes: LS (low agonist sensitivity) with a (CHRNA2/4)3:(CHRNB2)2 and HS (high agonist sensitivity) with a (CHRNA2/4)2:(CHRNB2)3 stoichiometry; the subtypes differ in their subunit binding interfaces which are involved in ligand binding. Cells produce predominantly an (CHRNA4)3:(CHRNB2)2 nAChR. The stoichiometric form (CHRNA4)2:(CHRNB2)3 expression is selectively up-regulated by nicotine and has lower single channel conductance and calcium permeability. Also part of the stoichiometric forms: (CHRNA4:CHRNB2)2:CHRNB3 or (CHRNA6:CHRNB2)2:CHRNB3. Can form heteropentamers with CHRNA7, mainly found in basal forebrain cholinergic neurons. Interacts with RIC3; which is required for proper folding and assembly. Interacts with LYPD6. As to expression, expressed in most regions of the CNS.

The protein localises to the synaptic cell membrane. The protein resides in the cell membrane. It catalyses the reaction Ca(2+)(in) = Ca(2+)(out). The enzyme catalyses K(+)(in) = K(+)(out). It carries out the reaction Na(+)(in) = Na(+)(out). With respect to regulation, activated by a myriad of ligands such as acetylcholine, cytisine, nicotine, choline and epibatidine. Channel potentiation by calcium is stoichiometry-selective, CHRNA4:CHRNB2 nACh receptor is achieved by calcium association with topographically distinct sites framed by anionic residues within the CHRNA4 subunit and between the CHRNA4 and CHRNB2 subunits. Oligomeric amyloid-beta protein 42 activates specifially CHRNA7:CHRNB2 nAchRs. nAChR activity is inhibited by the antagonist alpha-conotoxins BuIA, PnIA, PnIC, GID and MII, small disulfide-constrained peptides from cone snails. Its function is as follows. Component of neuronal acetylcholine receptors (nAChRs) that function as pentameric, ligand-gated cation channels with high calcium permeability among other activities. nAChRs are excitatory neurotrasnmitter receptors formed by a collection of nAChR subunits known to mediate synaptic transmission in the nervous system and the neuromuscular junction. Each nAchR subunit confers differential attributes to channel properties, including activation, deactivation and desensitization kinetics, pH sensitivity, cation permeability, and binding to allosteric modulators. CHRNB2 forms heteropentameric neuronal acetylcholine receptors with CHRNA2, CHRNA3, CHRNA4 and CHRNA6, as well as CHRNA5 and CHRNB3 as accesory subunits. Found in two major stoichiometric forms,(CHRNA4)3:(CHRNB2)2 and (CHRNA4)2:(CHRNB2)3, the two stoichiometric forms differ in their unitary conductance, calcium permeability, ACh sensitivity and potentiation by divalent cation. Heteropentameric channels with CHRNA6 and CHRNA4 exhibit high sensitivity to ACh and nicotine and are predominantly expressed in only a few brain areas, including dopaminergic neurons, norepirephrine neurons and cells of the visual system. nAChrs containing CHRNA6 subunits mediate endogenous cholinergic modulation of dopamine and gamma-aminobutyric acid (GABA) release in response to nicotine at nerve terminals. Also forms functional nAChRs with other subunits such as CHRNA7:CHRNB2, mainly expressed in basal forebrain cholinergic neurons. In Rattus norvegicus (Rat), this protein is Neuronal acetylcholine receptor subunit beta-2 (Chrnb2).